Here is a 216-residue protein sequence, read N- to C-terminus: 3-isopropylmalate dehydratase small subunit (216 aa).

Belongs to the LeuD family. LeuD type 1 subfamily. As to quaternary structure, heterodimer of LeuC and LeuD.

It carries out the reaction (2R,3S)-3-isopropylmalate = (2S)-2-isopropylmalate. It participates in amino-acid biosynthesis; L-leucine biosynthesis; L-leucine from 3-methyl-2-oxobutanoate: step 2/4. Catalyzes the isomerization between 2-isopropylmalate and 3-isopropylmalate, via the formation of 2-isopropylmaleate. The protein is 3-isopropylmalate dehydratase small subunit of Cupriavidus pinatubonensis (strain JMP 134 / LMG 1197) (Cupriavidus necator (strain JMP 134)).